The chain runs to 106 residues: MFCKHLSFVAITICFLLVLAKTENEIQQKNIKFDQRTWRNMRSNGYLALPRQGRSDNQPDYTCCGMPLTKYVGICPIGMECCPGLKKVLQKSGQRTIYSVCVADAY.

The first 20 residues, 1–20, serve as a signal peptide directing secretion; sequence MFCKHLSFVAITICFLLVLA. Positions 21 to 41 are cleaved as a propeptide — amino-terminal spacer peptide; that stretch reads KTENEIQQKNIKFDQRTWRNM. Glutamine 52 carries the post-translational modification Glutamine amide. The propeptide at 55 to 106 is carboxy-terminal spacer peptide; the sequence is SDNQPDYTCCGMPLTKYVGICPIGMECCPGLKKVLQKSGQRTIYSVCVADAY.

Expression is seen in the peripheral and central nervous systems in tissues such as the brain, the inferior buccal ganglion, the gastric ganglion, the olfactory lobe, the peduncle lobe and the optic lobe. Expression in the brain is distributed in the median inferior frontal lobe, the superior buccal lobe, the prebranchial lobe and the pedal lobe. Not expressed in the vasomotor lobe or the palliovisceral lobe that controls the cardiac system.

It localises to the secreted. In terms of biological role, evokes contractions in the radula protractor muscle, and may regulate feeding behavior and gut motility by controlling muscle contraction of the buccal mass. This chain is Small cardioactive peptide-related peptide, found in Octopus vulgaris (Common octopus).